The primary structure comprises 470 residues: ATP synthase subunit beta (470 aa).

157 to 164 (GGAGVGKT) is a binding site for ATP.

This sequence belongs to the ATPase alpha/beta chains family. In terms of assembly, F-type ATPases have 2 components, CF(1) - the catalytic core - and CF(0) - the membrane proton channel. CF(1) has five subunits: alpha(3), beta(3), gamma(1), delta(1), epsilon(1). CF(0) has three main subunits: a(1), b(2) and c(9-12). The alpha and beta chains form an alternating ring which encloses part of the gamma chain. CF(1) is attached to CF(0) by a central stalk formed by the gamma and epsilon chains, while a peripheral stalk is formed by the delta and b chains.

Its subcellular location is the cell inner membrane. The enzyme catalyses ATP + H2O + 4 H(+)(in) = ADP + phosphate + 5 H(+)(out). Produces ATP from ADP in the presence of a proton gradient across the membrane. The catalytic sites are hosted primarily by the beta subunits. This is ATP synthase subunit beta from Geobacter metallireducens (strain ATCC 53774 / DSM 7210 / GS-15).